The chain runs to 160 residues: Transcription elongation factor GreA (160 aa).

Residues 53–73 (AREEQGMVEARIRDIEGRLQN) are a coiled coil.

The protein belongs to the GreA/GreB family.

In terms of biological role, necessary for efficient RNA polymerase transcription elongation past template-encoded arresting sites. The arresting sites in DNA have the property of trapping a certain fraction of elongating RNA polymerases that pass through, resulting in locked ternary complexes. Cleavage of the nascent transcript by cleavage factors such as GreA or GreB allows the resumption of elongation from the new 3'terminus. GreA releases sequences of 2 to 3 nucleotides. The polypeptide is Transcription elongation factor GreA (Pseudomonas putida (strain ATCC 47054 / DSM 6125 / CFBP 8728 / NCIMB 11950 / KT2440)).